Reading from the N-terminus, the 114-residue chain is Large ribosomal subunit protein uL22c (114 aa).

Belongs to the universal ribosomal protein uL22 family. As to quaternary structure, part of the 50S ribosomal subunit.

The protein resides in the plastid. Its subcellular location is the chloroplast. This protein binds specifically to 23S rRNA. In terms of biological role, the globular domain of the protein is located near the polypeptide exit tunnel on the outside of the subunit, while an extended beta-hairpin is found that lines the wall of the exit tunnel in the center of the 70S ribosome. The protein is Large ribosomal subunit protein uL22c (rpl22) of Gracilaria tenuistipitata var. liui (Red alga).